Here is a 363-residue protein sequence, read N- to C-terminus: Chorismate synthase (363 aa).

The interval 44–63 (DLDRRKPGTSRHTTQRQEPD) is disordered. NADP(+) is bound by residues R48 and R54. FMN contacts are provided by residues 125–127 (RSS), 237–238 (NA), G277, 292–296 (KATSS), and R318.

It belongs to the chorismate synthase family. Homotetramer. The cofactor is FMNH2.

The catalysed reaction is 5-O-(1-carboxyvinyl)-3-phosphoshikimate = chorismate + phosphate. Its pathway is metabolic intermediate biosynthesis; chorismate biosynthesis; chorismate from D-erythrose 4-phosphate and phosphoenolpyruvate: step 7/7. Functionally, catalyzes the anti-1,4-elimination of the C-3 phosphate and the C-6 proR hydrogen from 5-enolpyruvylshikimate-3-phosphate (EPSP) to yield chorismate, which is the branch point compound that serves as the starting substrate for the three terminal pathways of aromatic amino acid biosynthesis. This reaction introduces a second double bond into the aromatic ring system. This Pseudomonas fluorescens (strain SBW25) protein is Chorismate synthase.